The chain runs to 391 residues: Elongation factor Tu 2 (391 aa).

Residues K10–E201 form the tr-type G domain. A G1 region spans residues G19–T26. Residue G19 to T26 participates in GTP binding. A Mg(2+)-binding site is contributed by T26. Residues G55 to S59 form a G2 region. Residues D76–G79 form a G3 region. GTP-binding positions include D76–H80 and N131–D134. The interval N131 to D134 is G4. The interval S169–L171 is G5.

It belongs to the TRAFAC class translation factor GTPase superfamily. Classic translation factor GTPase family. EF-Tu/EF-1A subfamily. As to quaternary structure, monomer.

The protein localises to the cytoplasm. It carries out the reaction GTP + H2O = GDP + phosphate + H(+). Functionally, GTP hydrolase that promotes the GTP-dependent binding of aminoacyl-tRNA to the A-site of ribosomes during protein biosynthesis. The sequence is that of Elongation factor Tu 2 from Bartonella bacilliformis (strain ATCC 35685 / KC583 / Herrer 020/F12,63).